Consider the following 588-residue polypeptide: DNA mismatch repair protein MutL (588 aa).

It belongs to the DNA mismatch repair MutL/HexB family.

This protein is involved in the repair of mismatches in DNA. It is required for dam-dependent methyl-directed DNA mismatch repair. May act as a 'molecular matchmaker', a protein that promotes the formation of a stable complex between two or more DNA-binding proteins in an ATP-dependent manner without itself being part of a final effector complex. In Methanocorpusculum labreanum (strain ATCC 43576 / DSM 4855 / Z), this protein is DNA mismatch repair protein MutL.